Reading from the N-terminus, the 201-residue chain is Large ribosomal subunit protein bL25 (201 aa).

Belongs to the bacterial ribosomal protein bL25 family. CTC subfamily. As to quaternary structure, part of the 50S ribosomal subunit; part of the 5S rRNA/L5/L18/L25 subcomplex. Contacts the 5S rRNA. Binds to the 5S rRNA independently of L5 and L18.

This is one of the proteins that binds to the 5S RNA in the ribosome where it forms part of the central protuberance. The protein is Large ribosomal subunit protein bL25 of Thiobacillus denitrificans (strain ATCC 25259 / T1).